We begin with the raw amino-acid sequence, 89 residues long: Small ribosomal subunit protein uS15 (89 aa).

Belongs to the universal ribosomal protein uS15 family. As to quaternary structure, part of the 30S ribosomal subunit. Forms a bridge to the 50S subunit in the 70S ribosome, contacting the 23S rRNA.

In terms of biological role, one of the primary rRNA binding proteins, it binds directly to 16S rRNA where it helps nucleate assembly of the platform of the 30S subunit by binding and bridging several RNA helices of the 16S rRNA. Forms an intersubunit bridge (bridge B4) with the 23S rRNA of the 50S subunit in the ribosome. This chain is Small ribosomal subunit protein uS15, found in Bdellovibrio bacteriovorus (strain ATCC 15356 / DSM 50701 / NCIMB 9529 / HD100).